We begin with the raw amino-acid sequence, 416 residues long: MSLSSKLSVQDLDLKDKRVFIRVDFNVPLDGKKITSNQRIVAALPTIKYVLEHHPRYVVLASHLGRPNGERNEKYSLAPVAKELQSLLGKDVTFLNDCVGPEVEAAVKASAPGSVILLENLRYHIEEEGSRKVDGQKVKASKEDVQKFRHELSSLADVYINDAFGTAHRAHSSMVGFDLPQRAAGFLLEKELKYFGKALENPTRPFLAILGGAKVADKIQLIDNLLDKVDSIIIGGGMAFTFKKVLENTEIGDSIFDKAGAEIVPKLMEKAKAKGVEVVLPVDFIIADAFSADANTKTVTDKEGIPAGWQGLDNGPESRKLFAATVAKAKTIVWNGPPGVFEFEKFAAGTKALLDEVVKSSAAGNTVIIGGGDTATVAKKYGVTDKISHVSTGGGASLELLEGKELPGVAFLSEKK.

Ser-2 carries the post-translational modification N-acetylserine. (2R)-3-phosphoglycerate-binding residues include Val-23, Asp-24, Phe-25, Asn-26, Gln-38, Arg-39, Ser-62, His-63, Gly-65, and Arg-66. Residue Lys-82 forms a Glycyl lysine isopeptide (Lys-Gly) (interchain with G-Cter in ubiquitin) linkage. At Thr-93 the chain carries Phosphothreonine. The residue at position 110 (Ser-110) is a Phosphoserine. Residues Leu-121 and Arg-122 each coordinate (2R)-3-phosphoglycerate. Residues Ser-130 and Ser-154 each carry the phosphoserine modification. Residues His-168 and Arg-169 each coordinate (2R)-3-phosphoglycerate. Ser-172 bears the Phosphoserine mark. A Glycyl lysine isopeptide (Lys-Gly) (interchain with G-Cter in ubiquitin) cross-link involves residue Lys-197. A Phosphothreonine modification is found at Thr-203. Gly-212 contacts ADP. A CDP-binding site is contributed by Gly-212. AMP contacts are provided by Ala-213 and Lys-214. ATP contacts are provided by Ala-213 and Lys-214. A Mg(2+)-binding site is contributed by Ala-213. Ala-216 and Asp-217 together coordinate Mg(2+). Asp-217 contributes to the CDP binding site. Lys-218 is an AMP binding site. An ATP-binding site is contributed by Lys-218. Gly-236 contributes to the ADP binding site. Residue Gly-236 coordinates CDP. Gly-237 contacts AMP. ATP is bound at residue Gly-237. A Phosphothreonine modification is found at Thr-241. Glycyl lysine isopeptide (Lys-Gly) (interchain with G-Cter in ubiquitin) cross-links involve residues Lys-258 and Lys-274. Thr-298 is subject to Phosphothreonine. Lys-302 participates in a covalent cross-link: Glycyl lysine isopeptide (Lys-Gly) (interchain with G-Cter in ubiquitin). Gly-311 lines the AMP pocket. ATP-binding residues include Gly-311 and Leu-312. Phosphoserine is present on Ser-318. Phosphothreonine is present on Thr-331. Asn-335 provides a ligand contact to ATP. CDP contacts are provided by Gly-336 and Phe-341. Phe-341 is a binding site for ADP. Glu-342 serves as a coordination point for AMP. Residue Glu-342 coordinates ATP. Residue Gly-371 participates in (2R)-3-phosphoglycerate binding. The ATP site is built by Asp-373 and Thr-374. Asp-373 provides a ligand contact to Mg(2+). A Phosphothreonine modification is found at Thr-392. Gly-394 and Gly-395 together coordinate (2R)-3-phosphoglycerate.

This sequence belongs to the phosphoglycerate kinase family. As to quaternary structure, monomer. The cofactor is Mg(2+).

It is found in the cytoplasm. It localises to the mitochondrion. It carries out the reaction (2R)-3-phosphoglycerate + ATP = (2R)-3-phospho-glyceroyl phosphate + ADP. It functions in the pathway carbohydrate degradation; glycolysis; pyruvate from D-glyceraldehyde 3-phosphate: step 2/5. Functionally, catalyzes one of the two ATP producing reactions in the glycolytic pathway via the reversible conversion of 1,3-diphosphoglycerate to 3-phosphoglycerate. Both L- and D- forms of purine and pyrimidine nucleotides can be used as substrates, but the activity is much lower on pyrimidines. Negatively regulates the biosynthesis of acetyl-CoA from pyruvate in the mitochondrion. In Saccharomyces cerevisiae (strain ATCC 204508 / S288c) (Baker's yeast), this protein is Phosphoglycerate kinase (PGK1).